We begin with the raw amino-acid sequence, 428 residues long: Enolase (428 aa).

Gln163 contributes to the (2R)-2-phosphoglycerate binding site. The Proton donor role is filled by Glu205. Mg(2+) contacts are provided by Asp242, Glu285, and Asp312. Residues Lys337, Arg366, Ser367, and Lys388 each coordinate (2R)-2-phosphoglycerate. Lys337 acts as the Proton acceptor in catalysis.

It belongs to the enolase family. Mg(2+) is required as a cofactor.

The protein resides in the cytoplasm. It localises to the secreted. The protein localises to the cell surface. It carries out the reaction (2R)-2-phosphoglycerate = phosphoenolpyruvate + H2O. The protein operates within carbohydrate degradation; glycolysis; pyruvate from D-glyceraldehyde 3-phosphate: step 4/5. In terms of biological role, catalyzes the reversible conversion of 2-phosphoglycerate (2-PG) into phosphoenolpyruvate (PEP). It is essential for the degradation of carbohydrates via glycolysis. This is Enolase from Neisseria meningitidis serogroup B (strain ATCC BAA-335 / MC58).